The following is a 547-amino-acid chain: Chaperonin GroEL 1 (547 aa).

ATP-binding positions include 30-33, Lys-51, 87-91, Gly-415, 479-481, and Asp-495; these read TLGP, DGTTT, and NAA. Positions 525 to 547 are disordered; that stretch reads PKKKGAPAGGGMGGMGGMDEMDY. Residues 531–541 show a composition bias toward gly residues; it reads PAGGGMGGMGG.

It belongs to the chaperonin (HSP60) family. As to quaternary structure, forms a cylinder of 14 subunits composed of two heptameric rings stacked back-to-back. Interacts with the co-chaperonin GroES.

Its subcellular location is the cytoplasm. It catalyses the reaction ATP + H2O + a folded polypeptide = ADP + phosphate + an unfolded polypeptide.. Functionally, together with its co-chaperonin GroES, plays an essential role in assisting protein folding. The GroEL-GroES system forms a nano-cage that allows encapsulation of the non-native substrate proteins and provides a physical environment optimized to promote and accelerate protein folding. The polypeptide is Chaperonin GroEL 1 (Anaeromyxobacter sp. (strain Fw109-5)).